We begin with the raw amino-acid sequence, 445 residues long: Tryptamine benzoyltransferase 1 (445 aa).

Active-site proton acceptor residues include histidine 150 and aspartate 382.

This sequence belongs to the plant acyltransferase family.

In terms of biological role, hydroxycinnamoyl transferase that catalyzes the transfer of an acyl from benzoyl-CoA to tryptamine, to produce benzoyl tryptamine. Serotonin and tyramine serve as acyl acceptors in vitro. Can use p-coumaroyl-CoA, and to a lesser extent caffeoyl-CoA, as acyl donors. The chain is Tryptamine benzoyltransferase 1 from Oryza sativa subsp. japonica (Rice).